We begin with the raw amino-acid sequence, 172 residues long: Adenylate kinase isoenzyme 6 (172 aa).

Positions 13, 15, 16, 17, and 18 each coordinate ATP. Residues 33–56 form an NMPbind region; sequence NVGDLAREGQLYDGYDEEYGCPIL. The LID stretch occupies residues 108-118; the sequence is TRGYNEKKLQD. Arg-109 contacts ATP.

It belongs to the adenylate kinase family. AK6 subfamily. Monomer and homodimer. Interacts with small ribosomal subunit protein uS11. Not a structural component of 43S pre-ribosomes, but transiently interacts with them by binding to uS11. Interacts with COIL (via C-terminus).

The protein resides in the cytoplasm. The protein localises to the nucleus. It localises to the nucleoplasm. It is found in the cajal body. The enzyme catalyses AMP + ATP = 2 ADP. It catalyses the reaction ATP + H2O = ADP + phosphate + H(+). In terms of biological role, broad-specificity nucleoside monophosphate (NMP) kinase that catalyzes the reversible transfer of the terminal phosphate group between nucleoside triphosphates and monophosphates. Also has ATPase activity. Involved in the late cytoplasmic maturation steps of the 40S ribosomal particles, specifically 18S rRNA maturation. While NMP activity is not required for ribosome maturation, ATPase activity is. Associates transiently with small ribosomal subunit protein uS11. ATP hydrolysis breaks the interaction with uS11. May temporarily remove uS11 from the ribosome to enable a conformational change of the ribosomal RNA that is needed for the final maturation step of the small ribosomal subunit. Its NMP activity may have a role in nuclear energy homeostasis. May be involved in regulation of Cajal body (CB) formation. This Mus musculus (Mouse) protein is Adenylate kinase isoenzyme 6.